A 2288-amino-acid polypeptide reads, in one-letter code: Protein Ycf2 (2288 aa).

An ATP-binding site is contributed by 1629–1636 (GSIGTGRS).

The protein belongs to the Ycf2 family.

It localises to the plastid. The protein resides in the chloroplast stroma. In terms of biological role, probable ATPase of unknown function. Its presence in a non-photosynthetic plant (Epifagus virginiana) and experiments in tobacco indicate that it has an essential function which is probably not related to photosynthesis. The sequence is that of Protein Ycf2 from Phaseolus vulgaris (Kidney bean).